The chain runs to 78 residues: uncharacterized protein (78 aa).

Over residues 56–66 the composition is skewed to basic and acidic residues; sequence ERANAGKRVSE. Residues 56 to 78 are disordered; it reads ERANAGKRVSEEEQINGKRKRKD.

This is an uncharacterized protein from Saccharomyces cerevisiae (strain ATCC 204508 / S288c) (Baker's yeast).